The chain runs to 319 residues: Cytochrome c biogenesis protein CcsA (319 aa).

The next 8 membrane-spanning stretches (helical) occupy residues 11–31 (VNFA…SLAF), 34–54 (ISGL…ALAL), 71–91 (LYES…FIES), 97–117 (LIGA…SLAL), 142–162 (IMMI…LFLI), 227–247 (IIGL…VWAN), 254–274 (WSWD…AAYL), and 288–308 (AILA…VNFL).

It belongs to the CcmF/CycK/Ccl1/NrfE/CcsA family. As to quaternary structure, may interact with Ccs1.

Its subcellular location is the plastid. It is found in the chloroplast thylakoid membrane. In terms of biological role, required during biogenesis of c-type cytochromes (cytochrome c6 and cytochrome f) at the step of heme attachment. This is Cytochrome c biogenesis protein CcsA from Porphyra purpurea (Red seaweed).